The sequence spans 364 residues: NF-kappa-B inhibitor epsilon (364 aa).

Residues 1-108 (MSDARKGPDE…GSPLPPAGVL (108 aa)) are disordered. S18 is modified (phosphoserine). The segment covering 36-48 (PGSGSSQSGCPQP) has biased composition (low complexity). Positions 51-70 (HAPETHKEPEKEDADGERAD) are enriched in basic and acidic residues. Residues 93-104 (PSPPAPGSPLPP) are compositionally biased toward pro residues. 6 ANK repeats span residues 122–155 (DGDT…DIQN), 157–186 (LYQT…SRIL), 190–219 (HGDT…EPGR), 233–262 (QGLA…DIDV), 267–296 (SGKT…RVDA), and 300–329 (NGCT…DSLL).

Belongs to the NF-kappa-B inhibitor family. Interacts with RELA, REL, NFKB1 nuclear factor NF-kappa-B p50 subunit and NFKB2 nuclear factor NF-kappa-B p52 subunit. Interacts with HNRNPA2B1; the interaction may be mediated by the RRM2 domain of HNRNPA2B1, and HNRNPA2B1 may interact simultaneously with FAM76B and either NFKBIA or NFKBIE to form a complex. In terms of processing, serine phosphorylated; followed by proteasome-dependent degradation.

The protein localises to the cytoplasm. In terms of biological role, sequesters NF-kappa-B transcription factor complexes in the cytoplasm, thereby inhibiting their activity. Sequestered complexes include NFKB1/p50-RELA/p65 and NFKB1/p50-REL/c-Rel complexes. Limits B-cell activation in response to pathogens, and also plays an important role in B-cell development. The protein is NF-kappa-B inhibitor epsilon (Nfkbie) of Mus musculus (Mouse).